Consider the following 445-residue polypeptide: UDP-N-acetylmuramoylalanine--D-glutamate ligase (445 aa).

117 to 123 is a binding site for ATP; sequence GSNGKTT.

Belongs to the MurCDEF family.

The protein resides in the cytoplasm. The catalysed reaction is UDP-N-acetyl-alpha-D-muramoyl-L-alanine + D-glutamate + ATP = UDP-N-acetyl-alpha-D-muramoyl-L-alanyl-D-glutamate + ADP + phosphate + H(+). It functions in the pathway cell wall biogenesis; peptidoglycan biosynthesis. Cell wall formation. Catalyzes the addition of glutamate to the nucleotide precursor UDP-N-acetylmuramoyl-L-alanine (UMA). This chain is UDP-N-acetylmuramoylalanine--D-glutamate ligase, found in Neisseria meningitidis serogroup C (strain 053442).